The primary structure comprises 344 residues: S-adenosylmethionine:tRNA ribosyltransferase-isomerase (344 aa).

It belongs to the QueA family. Monomer.

The protein resides in the cytoplasm. It catalyses the reaction 7-aminomethyl-7-carbaguanosine(34) in tRNA + S-adenosyl-L-methionine = epoxyqueuosine(34) in tRNA + adenine + L-methionine + 2 H(+). It functions in the pathway tRNA modification; tRNA-queuosine biosynthesis. Its function is as follows. Transfers and isomerizes the ribose moiety from AdoMet to the 7-aminomethyl group of 7-deazaguanine (preQ1-tRNA) to give epoxyqueuosine (oQ-tRNA). This Lactiplantibacillus plantarum (strain ATCC BAA-793 / NCIMB 8826 / WCFS1) (Lactobacillus plantarum) protein is S-adenosylmethionine:tRNA ribosyltransferase-isomerase.